The chain runs to 202 residues: Josephin-1 (202 aa).

The disordered stretch occupies residues 1–22 (MSCVPWKGDKAKAESSDLPQAA). The residue at position 15 (Ser15) is a Phosphoserine. The Josephin domain occupies 23-202 (PPQIYHEKQR…EAHQSWRADV (180 aa)). The active-site Nucleophile is Cys36. Catalysis depends on His139, which acts as the Proton acceptor.

In terms of assembly, interacts with beta-actin/ACTB. Post-translationally, monoubiquitinated. Ubiquitination activates deubiquitination activity in vitro. Widely expressed (at protein level).

The protein resides in the cell membrane. Its subcellular location is the cytoplasm. It catalyses the reaction Thiol-dependent hydrolysis of ester, thioester, amide, peptide and isopeptide bonds formed by the C-terminal Gly of ubiquitin (a 76-residue protein attached to proteins as an intracellular targeting signal).. Functionally, deubiquitinates monoubiquitinated probes (in vitro). When ubiquitinated, cleaves 'Lys-63'-linked and 'Lys-48'-linked poly-ubiquitin chains (in vitro), hence may act as a deubiquitinating enzyme. May increase macropinocytosis and suppress clathrin- and caveolae-mediated endocytosis. May enhance membrane dynamics and cell motility independently of its catalytic activity. The chain is Josephin-1 (Josd1) from Mus musculus (Mouse).